Consider the following 206-residue polypeptide: Small ribosomal subunit protein uS4 (206 aa).

Residues 96 to 156 (GRLDNVVYRM…EKAKKQARIK (61 aa)) enclose the S4 RNA-binding domain.

Belongs to the universal ribosomal protein uS4 family. In terms of assembly, part of the 30S ribosomal subunit. Contacts protein S5. The interaction surface between S4 and S5 is involved in control of translational fidelity.

In terms of biological role, one of the primary rRNA binding proteins, it binds directly to 16S rRNA where it nucleates assembly of the body of the 30S subunit. Its function is as follows. With S5 and S12 plays an important role in translational accuracy. This is Small ribosomal subunit protein uS4 from Aeromonas salmonicida (strain A449).